The sequence spans 577 residues: Nuclear receptor subfamily 4 group A member 1 (577 aa).

Positions 243-318 form a DNA-binding region, nuclear receptor; it reads EGRCAVCGDN…VGMVKEVVRT (76 aa). NR C4-type zinc fingers lie at residues 246–266 and 282–311; these read CAVC…CEGC and CLAN…VVGM. The tract at residues 247-333 is required for binding NBRE-containing DNA; sequence AVCGDNASCQ…RRGRLPSKPK (87 aa). An NR LBD domain is found at 339 to 574; it reads SPVDLINSLV…PIVDKIFMDT (236 aa). Positions 500 to 523 are may bind lipopolysaccharide; sequence PKKVEELQSQIINCLKEHIPSSMN. Residues 563–574 are AF-2; sequence PPPIVDKIFMDT.

Belongs to the nuclear hormone receptor family. NR4 subfamily. Requires Zn(2+) as cofactor.

It is found in the nucleus. The protein localises to the cytoplasm. It localises to the cytosol. In terms of biological role, orphan nuclear receptor. Binds the NGFI-B response element (NBRE) 5'-AAAAGGTCA-3'. Its function is as follows. In the cytosol, may detect bacterial lipopolysaccharide (LPS) and NBRE-containing mitochondrial DNA released during pyroptosis, and play a role in non-canonical inflammasome activation. This is Nuclear receptor subfamily 4 group A member 1 (nr4a1) from Xenopus laevis (African clawed frog).